A 1190-amino-acid chain; its full sequence is DNA-directed RNA polymerase subunit beta (1190 aa).

Positions 1155–1190 (ENFDDDDDHAPDAIMVDVKPAEREEAGEEKDAVTKE) are disordered. The segment covering 1173–1190 (KPAEREEAGEEKDAVTKE) has biased composition (basic and acidic residues).

It belongs to the RNA polymerase beta chain family. As to quaternary structure, the RNAP catalytic core consists of 2 alpha, 1 beta, 1 beta' and 1 omega subunit. When a sigma factor is associated with the core the holoenzyme is formed, which can initiate transcription.

The enzyme catalyses RNA(n) + a ribonucleoside 5'-triphosphate = RNA(n+1) + diphosphate. DNA-dependent RNA polymerase catalyzes the transcription of DNA into RNA using the four ribonucleoside triphosphates as substrates. This is DNA-directed RNA polymerase subunit beta from Geobacillus kaustophilus (strain HTA426).